Here is a 203-residue protein sequence, read N- to C-terminus: MKSIEDLIKKATELKSEGLSEGQISEELNVSRETITWLLTHAERATVPGPKDISVDWSMIGRSAYRLSHIAQALTEMIFDILDEKELDIDIVVGVALSGVPLASMVADHMGVGLAVYMPTKQMASQDVKPHGNLSTNFSDVSGRECVIVDDVITSGRTLEEAVAYLDDRGAKTNVIAVLIDKKGIDSIAGVPVCSLLKVIRVN.

The protein belongs to the purine/pyrimidine phosphoribosyltransferase family. GfcR subfamily.

The protein is Transcriptional regulator GfcR of Methanothrix thermoacetophila (strain DSM 6194 / JCM 14653 / NBRC 101360 / PT) (Methanosaeta thermophila).